The chain runs to 160 residues: Small ribosomal subunit protein uS7 (160 aa).

The protein belongs to the universal ribosomal protein uS7 family. Part of the 30S ribosomal subunit. Contacts proteins S9 and S11.

Its function is as follows. One of the primary rRNA binding proteins, it binds directly to 16S rRNA where it nucleates assembly of the head domain of the 30S subunit. Is located at the subunit interface close to the decoding center, probably blocks exit of the E-site tRNA. The protein is Small ribosomal subunit protein uS7 of Rickettsia canadensis (strain McKiel).